The sequence spans 380 residues: Alkaline protease (380 aa).

The N-terminal stretch at 1–27 (MKKPLGKIVASTALLISVAFSSSIASA) is a signal peptide. A propeptide spanning residues 28-112 (AEEAKEKYLI…EEDAEVTTMA (85 aa)) is cleaved from the precursor. One can recognise an Inhibitor I9 domain in the interval 34–111 (KYLIGFNEQE…IEEDAEVTTM (78 aa)). Residue glutamine 113 participates in Ca(2+) binding. A Peptidase S8 domain is found at 116 to 379 (PWGISRVQAP…SGLVNAEAAT (264 aa)). Aspartate 143 functions as the Charge relay system in the catalytic mechanism. Aspartate 151 provides a ligand contact to Ca(2+). The Charge relay system role is filled by histidine 173. Residues leucine 184, asparagine 186, isoleucine 188, valine 190, alanine 274, tyrosine 276, and alanine 279 each contribute to the Ca(2+) site. Residue serine 326 is the Charge relay system of the active site.

Belongs to the peptidase S8 family. Ca(2+) is required as a cofactor.

It localises to the secreted. The polypeptide is Alkaline protease (Alkalihalobacillus alcalophilus (Bacillus alcalophilus)).